Consider the following 490-residue polypeptide: B3 domain-containing protein REM14 (490 aa).

3 consecutive DNA-binding regions (TF-B3) follow at residues 3–95, 130–226, and 236–333; these read NQHF…LGPS, CFSA…LPKG, and CFVA…LSNE. Residues 343 to 367 are disordered; sequence NEVESLSTDQESHEESSHNEKISRR. Residues 352 to 364 show a composition bias toward basic and acidic residues; sequence QESHEESSHNEKI. The TF-B3 4 DNA-binding region spans 387–484; that stretch reads FVTLNLTPYN…TSCVLKFCSK (98 aa).

It is found in the nucleus. The protein is B3 domain-containing protein REM14 (REM14) of Arabidopsis thaliana (Mouse-ear cress).